A 256-amino-acid polypeptide reads, in one-letter code: Small ribosomal subunit protein eS1 (256 aa).

N-acetylalanine; partial is present on A2.

Belongs to the eukaryotic ribosomal protein eS1 family. As to quaternary structure, component of the small ribosomal subunit. Mature ribosomes consist of a small (40S) and a large (60S) subunit. The 40S subunit contains about 33 different proteins and 1 molecule of RNA (18S). The 60S subunit contains about 49 different proteins and 3 molecules of RNA (25S, 5.8S and 5S).

Its subcellular location is the cytoplasm. In Komagataella phaffii (strain GS115 / ATCC 20864) (Yeast), this protein is Small ribosomal subunit protein eS1.